The chain runs to 248 residues: 3-deoxy-manno-octulosonate cytidylyltransferase (248 aa).

The protein belongs to the KdsB family.

The protein localises to the cytoplasm. It catalyses the reaction 3-deoxy-alpha-D-manno-oct-2-ulosonate + CTP = CMP-3-deoxy-beta-D-manno-octulosonate + diphosphate. Its pathway is nucleotide-sugar biosynthesis; CMP-3-deoxy-D-manno-octulosonate biosynthesis; CMP-3-deoxy-D-manno-octulosonate from 3-deoxy-D-manno-octulosonate and CTP: step 1/1. The protein operates within bacterial outer membrane biogenesis; lipopolysaccharide biosynthesis. Activates KDO (a required 8-carbon sugar) for incorporation into bacterial lipopolysaccharide in Gram-negative bacteria. The sequence is that of 3-deoxy-manno-octulosonate cytidylyltransferase from Desulfosudis oleivorans (strain DSM 6200 / JCM 39069 / Hxd3) (Desulfococcus oleovorans).